Here is a 350-residue protein sequence, read N- to C-terminus: C5a anaphylatoxin chemotactic receptor 1 (350 aa).

Topologically, residues 1–37 (MDSFNYTTPDYGHYDDKDTLDPNTPVDKTSNTLRVPD) are extracellular. Positions 10–18 (DYGHYDDKD) are required for CHIPS binding. Sulfotyrosine occurs at positions 11 and 14. The tract at residues 21–30 (DPNTPVDKTS) is involved in C5a binding. Residues 38 to 64 (ILALVIFAVVFLVGVLGNALVVWVTAF) form a helical membrane-spanning segment. The Cytoplasmic segment spans residues 65–69 (EVKRT). A helical transmembrane segment spans residues 70–93 (INAIWFLNLAVADFLSCLALPILF). Residues 94 to 110 (TSIVQHHHWPFGGAACR) are Extracellular-facing. Cys-109 and Cys-188 are oxidised to a cystine. The chain crosses the membrane as a helical span at residues 111–132 (ILPSLILLNMYASILLLATISA). Topologically, residues 133 to 153 (DRFLLVFKPIWCQNFRGAGLA) are cytoplasmic. Residues 154–174 (WIACAVAWGLALLLTIPSFLY) form a helical membrane-spanning segment. Topologically, residues 175–200 (RVVREEYFPPKVLCGVDYSHDKQRER) are extracellular. The helical transmembrane segment at 201 to 226 (AVAVVRLVLGFLWPLLTLTICYTFIL) threads the bilayer. At 227–242 (LRTWSRRATRSTKTLK) the chain is on the cytoplasmic side. A helical membrane pass occupies residues 243–265 (VVVAVVASFFIFWLPYQVTGIMM). At 266–282 (SFLEPSSPTFLLLKKLD) the chain is on the extracellular side. Residues 283–303 (SLCVSFAYINCCINPIIYVVA) form a helical membrane-spanning segment. Residues 304 to 350 (GQGFQGRLRKSLPSLLRNVLTEESVVRESKSFTRSTVDTMAEKTQAV) are Cytoplasmic-facing. Residues Ser-314, Ser-317, Ser-327, Ser-332, Ser-334, and Ser-338 each carry the phosphoserine modification.

Belongs to the G-protein coupled receptor 1 family. In terms of assembly, homodimer. May also form higher-order oligomers. Interacts (when phosphorylated) with ARRB1 and ARRB2; the interaction is associated with internalization of C5aR. Interacts (via N-terminal domain) with S.aureus chemotaxis inhibitory protein (CHIPS); the interaction blocks the receptor and may thus inhibit the immune response. Post-translationally, sulfation plays a critical role in the association of C5aR with C5a, but no significant role in the ability of the receptor to transduce a signal and mobilize calcium in response to a small peptide agonist. Sulfation at Tyr-14 is important for CHIPS binding. Phosphorylated on serine residues in response to C5a binding, resulting in internalization of the receptor and short-term desensitization to C5a.

It is found in the cell membrane. The protein localises to the cytoplasmic vesicle. Its function is as follows. Receptor for the chemotactic and inflammatory peptide anaphylatoxin C5a. The ligand interacts with at least two sites on the receptor: a high-affinity site on the extracellular N-terminus, and a second site in the transmembrane region which activates downstream signaling events. Receptor activation stimulates chemotaxis, granule enzyme release, intracellular calcium release and superoxide anion production. In Gorilla gorilla gorilla (Western lowland gorilla), this protein is C5a anaphylatoxin chemotactic receptor 1 (C5AR1).